The sequence spans 456 residues: Bifunctional protein GlmU (456 aa).

Residues 1–228 form a pyrophosphorylase region; sequence MPQNTLNIVI…SHLAAGVNNK (228 aa). UDP-N-acetyl-alpha-D-glucosamine is bound by residues 11 to 14, Lys25, Gln75, 80 to 81, 102 to 104, Gly138, Glu153, Asn168, and Asn226; these read LAAG, GT, and YGD. Mg(2+) is bound at residue Asp104. Asn226 provides a ligand contact to Mg(2+). Positions 229 to 249 are linker; the sequence is LQLAELERIFQTEQAQELLKA. Residues 250–456 are N-acetyltransferase; that stretch reads GVTLRDPARF…GWVRPEKNKQ (207 aa). UDP-N-acetyl-alpha-D-glucosamine-binding residues include Arg332 and Lys350. His362 functions as the Proton acceptor in the catalytic mechanism. UDP-N-acetyl-alpha-D-glucosamine is bound by residues Tyr365 and Asn376. Residues Ala379, 385 to 386, Ser404, Ala422, and Arg439 contribute to the acetyl-CoA site; that span reads NY.

This sequence in the N-terminal section; belongs to the N-acetylglucosamine-1-phosphate uridyltransferase family. In the C-terminal section; belongs to the transferase hexapeptide repeat family. In terms of assembly, homotrimer. Requires Mg(2+) as cofactor.

The protein localises to the cytoplasm. It catalyses the reaction alpha-D-glucosamine 1-phosphate + acetyl-CoA = N-acetyl-alpha-D-glucosamine 1-phosphate + CoA + H(+). It carries out the reaction N-acetyl-alpha-D-glucosamine 1-phosphate + UTP + H(+) = UDP-N-acetyl-alpha-D-glucosamine + diphosphate. It participates in nucleotide-sugar biosynthesis; UDP-N-acetyl-alpha-D-glucosamine biosynthesis; N-acetyl-alpha-D-glucosamine 1-phosphate from alpha-D-glucosamine 6-phosphate (route II): step 2/2. Its pathway is nucleotide-sugar biosynthesis; UDP-N-acetyl-alpha-D-glucosamine biosynthesis; UDP-N-acetyl-alpha-D-glucosamine from N-acetyl-alpha-D-glucosamine 1-phosphate: step 1/1. The protein operates within bacterial outer membrane biogenesis; LPS lipid A biosynthesis. Its function is as follows. Catalyzes the last two sequential reactions in the de novo biosynthetic pathway for UDP-N-acetylglucosamine (UDP-GlcNAc). The C-terminal domain catalyzes the transfer of acetyl group from acetyl coenzyme A to glucosamine-1-phosphate (GlcN-1-P) to produce N-acetylglucosamine-1-phosphate (GlcNAc-1-P), which is converted into UDP-GlcNAc by the transfer of uridine 5-monophosphate (from uridine 5-triphosphate), a reaction catalyzed by the N-terminal domain. The protein is Bifunctional protein GlmU of Neisseria meningitidis serogroup A / serotype 4A (strain DSM 15465 / Z2491).